The primary structure comprises 340 residues: Aliphatic sulfonates import ATP-binding protein SsuB 1 (340 aa).

Positions 44–72 (THHHARVAAQGHARGDAQPPAGALARDDG) are disordered. Residues 80-299 (VQLRGVGKRY…ARASAGFAAL (220 aa)) enclose the ABC transporter domain. Position 112 to 119 (112 to 119 (GRSGCGKS)) interacts with ATP.

The protein belongs to the ABC transporter superfamily. Aliphatic sulfonates importer (TC 3.A.1.17.2) family. In terms of assembly, the complex is composed of two ATP-binding proteins (SsuB), two transmembrane proteins (SsuC) and a solute-binding protein (SsuA).

Its subcellular location is the cell inner membrane. It carries out the reaction ATP + H2O + aliphatic sulfonate-[sulfonate-binding protein]Side 1 = ADP + phosphate + aliphatic sulfonateSide 2 + [sulfonate-binding protein]Side 1.. Functionally, part of the ABC transporter complex SsuABC involved in aliphatic sulfonates import. Responsible for energy coupling to the transport system. The sequence is that of Aliphatic sulfonates import ATP-binding protein SsuB 1 from Paraburkholderia xenovorans (strain LB400).